We begin with the raw amino-acid sequence, 437 residues long: Probable glycine dehydrogenase (decarboxylating) subunit 1 (437 aa).

The protein belongs to the GcvP family. N-terminal subunit subfamily. In terms of assembly, the glycine cleavage system is composed of four proteins: P, T, L and H. In this organism, the P 'protein' is a heterodimer of two subunits.

It carries out the reaction N(6)-[(R)-lipoyl]-L-lysyl-[glycine-cleavage complex H protein] + glycine + H(+) = N(6)-[(R)-S(8)-aminomethyldihydrolipoyl]-L-lysyl-[glycine-cleavage complex H protein] + CO2. In terms of biological role, the glycine cleavage system catalyzes the degradation of glycine. The P protein binds the alpha-amino group of glycine through its pyridoxal phosphate cofactor; CO(2) is released and the remaining methylamine moiety is then transferred to the lipoamide cofactor of the H protein. This chain is Probable glycine dehydrogenase (decarboxylating) subunit 1, found in Thermotoga petrophila (strain ATCC BAA-488 / DSM 13995 / JCM 10881 / RKU-1).